Consider the following 472-residue polypeptide: Zinc finger imprinted 3 (472 aa).

The 73-residue stretch at 8-80 (VTFEDVTVNF…EEEVLGSGRA (73 aa)) folds into the KRAB domain. C2H2-type zinc fingers lie at residues 167–189 (LKCN…LRRH), 195–217 (FECH…QKTH), 223–245 (YKCE…QKMH), 251–273 (YQCK…EKIH), 279–301 (YQCN…KKVH), 307–329 (FQCT…QRIH), 335–357 (YKCS…EKIH), 363–385 (YECD…KKIH), 391–413 (YECN…QKTH), 419–441 (YRCS…KKTH), and 447–470 (YGCS…KRIH).

This sequence belongs to the krueppel C2H2-type zinc-finger protein family.

The protein localises to the nucleus. Functionally, may be involved in transcriptional regulation. This is Zinc finger imprinted 3 (ZIM3) from Homo sapiens (Human).